The following is a 365-amino-acid chain: tRNA 2-selenouridine synthase (365 aa).

The 123-residue stretch at 16–138 (FLLKTPLIDL…LRRYLINVID (123 aa)) folds into the Rhodanese domain. The active-site S-selanylcysteine intermediate is the Cys-98.

This sequence belongs to the SelU family. As to quaternary structure, monomer.

The catalysed reaction is 5-methylaminomethyl-2-thiouridine(34) in tRNA + selenophosphate + (2E)-geranyl diphosphate + H2O + H(+) = 5-methylaminomethyl-2-selenouridine(34) in tRNA + (2E)-thiogeraniol + phosphate + diphosphate. It carries out the reaction 5-methylaminomethyl-2-thiouridine(34) in tRNA + (2E)-geranyl diphosphate = 5-methylaminomethyl-S-(2E)-geranyl-thiouridine(34) in tRNA + diphosphate. It catalyses the reaction 5-methylaminomethyl-S-(2E)-geranyl-thiouridine(34) in tRNA + selenophosphate + H(+) = 5-methylaminomethyl-2-(Se-phospho)selenouridine(34) in tRNA + (2E)-thiogeraniol. The enzyme catalyses 5-methylaminomethyl-2-(Se-phospho)selenouridine(34) in tRNA + H2O = 5-methylaminomethyl-2-selenouridine(34) in tRNA + phosphate. Involved in the post-transcriptional modification of the uridine at the wobble position (U34) of tRNA(Lys), tRNA(Glu) and tRNA(Gln). Catalyzes the conversion of 2-thiouridine (S2U-RNA) to 2-selenouridine (Se2U-RNA). Acts in a two-step process involving geranylation of 2-thiouridine (S2U) to S-geranyl-2-thiouridine (geS2U) and subsequent selenation of the latter derivative to 2-selenouridine (Se2U) in the tRNA chain. This is tRNA 2-selenouridine synthase from Psychromonas ingrahamii (strain DSM 17664 / CCUG 51855 / 37).